A 264-amino-acid polypeptide reads, in one-letter code: Thymidylate synthase (264 aa).

DUMP-binding positions include R21 and 126–127 (RR). The active-site Nucleophile is the C146. DUMP-binding positions include 166–169 (RSAD), N177, and 207–209 (HLY). Residue D169 coordinates (6R)-5,10-methylene-5,6,7,8-tetrahydrofolate. A263 contacts (6R)-5,10-methylene-5,6,7,8-tetrahydrofolate.

It belongs to the thymidylate synthase family. Bacterial-type ThyA subfamily. Homodimer.

Its subcellular location is the cytoplasm. The enzyme catalyses dUMP + (6R)-5,10-methylene-5,6,7,8-tetrahydrofolate = 7,8-dihydrofolate + dTMP. It functions in the pathway pyrimidine metabolism; dTTP biosynthesis. Functionally, catalyzes the reductive methylation of 2'-deoxyuridine-5'-monophosphate (dUMP) to 2'-deoxythymidine-5'-monophosphate (dTMP) while utilizing 5,10-methylenetetrahydrofolate (mTHF) as the methyl donor and reductant in the reaction, yielding dihydrofolate (DHF) as a by-product. This enzymatic reaction provides an intracellular de novo source of dTMP, an essential precursor for DNA biosynthesis. The sequence is that of Thymidylate synthase from Rhodopseudomonas palustris (strain HaA2).